A 195-amino-acid polypeptide reads, in one-letter code: Magnetosome membrane protein 22 (195 aa).

Positions 1-28 are enriched in low complexity; the sequence is MAAQTAASEAPAPAAAPADSPTTAGPTP. The disordered stretch occupies residues 1 to 31; it reads MAAQTAASEAPAPAAAPADSPTTAGPTPDSV. A run of 3 helical transmembrane segments spans residues 45–65, 90–110, and 115–135; these read VLAAVAASIVPVPLFDIAAVV, SVIASLAGGVVGYGAGMAVAV, and LIPGVGWMLGMVSLPVIAGAT.

Its subcellular location is the magnetosome membrane. This is Magnetosome membrane protein 22 from Magnetospirillum gryphiswaldense (strain DSM 6361 / JCM 21280 / NBRC 15271 / MSR-1).